A 64-amino-acid chain; its full sequence is Probable cytochrome c oxidase subunit 5C-3 (64 aa).

A helical membrane pass occupies residues 15–34; it reads SVVKELVIGLTLGLAAGGLW.

It belongs to the cytochrome c oxidase subunit 5C family.

The protein resides in the mitochondrion inner membrane. This protein is one of the nuclear-coded polypeptide chains of cytochrome c oxidase, the terminal oxidase in mitochondrial electron transport. In Arabidopsis thaliana (Mouse-ear cress), this protein is Probable cytochrome c oxidase subunit 5C-3.